The primary structure comprises 174 residues: MNHDKSPIILIGFMGTGKSTIGKYVADEQNLSFIDIDSYIEEKYKLTIPEIFCKHGEQYFRNLEFTCLQECINTADIIATGGGIIESEEAFNFLKNQKNIIWLDCNIDIIYSRINDDPHRPNANNKTIKQLNDLYCSRNLRYNEIAFKKFDSHLLSISEIYYELLNLIKASDQY.

Residue glycine 15 to threonine 20 participates in ATP binding. Mg(2+) is bound at residue serine 19. Aspartate 37, arginine 61, and glycine 82 together coordinate substrate. Arginine 120 is a binding site for ATP. Arginine 138 contributes to the substrate binding site.

It belongs to the shikimate kinase family. In terms of assembly, monomer. Requires Mg(2+) as cofactor.

The protein localises to the cytoplasm. It carries out the reaction shikimate + ATP = 3-phosphoshikimate + ADP + H(+). The protein operates within metabolic intermediate biosynthesis; chorismate biosynthesis; chorismate from D-erythrose 4-phosphate and phosphoenolpyruvate: step 5/7. Functionally, catalyzes the specific phosphorylation of the 3-hydroxyl group of shikimic acid using ATP as a cosubstrate. This is Shikimate kinase from Staphylococcus aureus (strain NCTC 8325 / PS 47).